Here is a 370-residue protein sequence, read N- to C-terminus: MVQGCLCWRGCCDLKTSFPWVTNSRRLWMNCIGCNPVWRLRAWGCLAGGTTLMVIWLFWLLRSVPGGAPAPQPTLTILIWHWPFTNRSPELSSDTCTRYGMASCHLSANRSLLASADAVVFHHRELQTRHSRLPLDQRPHGQPWVWATMESPSNTHGLRHFRGIFNWVLSYRRDSDIFVPYGRLEPFSGPTPPLPAKSRMAAWVVSNFQERQQRAKLYRQLAPHLKVDVFGRASGRPLCPNCLLPTVARYRFYLSFENSQHRDYITEKFWRNALAAGAVPVVLGPPRTTYEAFVPPDAFIHVDDFSSARELAVFLVSMNESRYRGFFAWRDRLRVRLLNDWRERFCTICARYPYLPRSQVYEDLESWFQA.

Residues 1–36 are Cytoplasmic-facing; that stretch reads MVQGCLCWRGCCDLKTSFPWVTNSRRLWMNCIGCNP. Residues 37-59 traverse the membrane as a helical; Signal-anchor for type II membrane protein segment; the sequence is VWRLRAWGCLAGGTTLMVIWLFW. Residues 60–370 lie on the Lumenal side of the membrane; that stretch reads LLRSVPGGAP…YEDLESWFQA (311 aa). N-linked (GlcNAc...) asparagine glycosylation is present at Asn-86. Residues Cys-96 and Cys-104 are joined by a disulfide bond. Residue Asn-109 is glycosylated (N-linked (GlcNAc...) asparagine). An intrachain disulfide couples Cys-239 to Cys-242. Asn-319 carries N-linked (GlcNAc...) asparagine glycosylation. A disulfide bridge connects residues Cys-346 and Cys-349.

It belongs to the glycosyltransferase 10 family. In terms of processing, N-glycosylated. Expressed in lymph node and kidney.

It is found in the golgi apparatus. Its subcellular location is the golgi stack membrane. The catalysed reaction is an N-acetyl-alpha-neuraminyl-(2-&gt;3)-beta-D-galactosyl-(1-&gt;4)-N-acetyl-beta-D-glucosaminyl derivative + GDP-beta-L-fucose = an alpha-Neu5Ac-(2-&gt;3)-beta-D-Gal-(1-&gt;4)-[alpha-L-Fuc-(1-&gt;3)]-beta-D-GlcNAc derivative + GDP + H(+). The enzyme catalyses a neolactoside IV(3)-alpha-NeuAc-nLc4Cer + GDP-beta-L-fucose = a neolactoside IV(3)-alpha-NeuNAc,III(3)-alpha-Fuc-nLc4Cer + GDP + H(+). It carries out the reaction a neolactoside VI(3)-alpha-NeuNAc-nLc6Cer + GDP-beta-L-fucose = a neolactoside VI(3)-alpha-NeuAc,V(3)-alphaFuc-nLc6Cer + GDP + H(+). It catalyses the reaction an alpha-Neu5Ac-(2-&gt;3)-beta-D-Gal-(1-&gt;4)-beta-D-GlcNAc-(1-&gt;3)-beta-D-Gal-(1-&gt;4)-[alpha-L-Fuc-(1-&gt;3)]-beta-D-GlcNAc derivative + GDP-beta-L-fucose = an alpha-Neu5Ac-(2-&gt;3)-beta-D-Gal-(1-&gt;4)-[alpha-L-Fuc-(1-&gt;3)]-beta-D-GlcNAc-(1-&gt;3)-beta-D-Gal-(1-&gt;4)-[alpha-L-Fuc-(1-&gt;3)]-beta-D-GlcNAc derivative + GDP + H(+). The catalysed reaction is an alpha-Neu5Ac-(2-&gt;3)-beta-D-Gal-(1-&gt;4)-beta-D-GlcNAc6S derivative + GDP-beta-L-fucose = an alpha-Neu5Ac-(2-&gt;3)-beta-D-Gal-(1-&gt;4)-[alpha-L-Fuc-(1-&gt;3)]-beta-D-GlcNAc6S derivative + GDP + H(+). The enzyme catalyses alpha-Neu5Ac-(2-&gt;3)-beta-D-Gal-(1-&gt;4)-beta-D-GlcNAc-(1-&gt;3)-beta-D-Gal-(1-&gt;4)-D-Glc + GDP-beta-L-fucose = alpha-Neu5Ac-(2-&gt;3)-beta-D-Gal-(1-&gt;4)-[alpha-L-Fuc-(1-&gt;3)]-beta-D-GlcNAc-(1-&gt;3)-beta-D-Gal-(1-&gt;4)-D-Glc + GDP + H(+). It carries out the reaction alpha-Neu5Ac-(2-&gt;3)-beta-D-Gal-(1-&gt;4)-beta-D-GlcNAc-(1-&gt;3)-beta-D-Gal-(1-&gt;4)-[alpha-L-Fuc-(1-&gt;3)]-beta-D-GlcNAc-(1-&gt;3)-beta-D-Gal-(1-&gt;4)-beta-D-GlcNAc + GDP-beta-L-fucose = alpha-Neu5Ac-(2-&gt;3)-beta-D-Gal-(1-&gt;4)-[alpha-L-Fuc-(1-&gt;3)]-beta-D-GlcNAc-(1-&gt;3)-beta-D-Gal-(1-&gt;4)-[alpha-L-Fuc-(1-&gt;3)]-beta-D-GlcNAc-(1-&gt;3)-beta-D-Gal-(1-&gt;4)-beta-D-GlcNAc + GDP + H(+). It catalyses the reaction alpha-Neu5Ac-(2-&gt;3)-beta-D-Gal-(1-&gt;4)-beta-D-GlcNAc-(1-&gt;3)-beta-D-Gal-(1-&gt;4)-beta-D-GlcNAc-(1-&gt;3)-beta-D-Gal-(1-&gt;4)-beta-D-GlcNAc + GDP-beta-L-fucose = alpha-Neu5Ac-(2-&gt;3)-beta-D-Gal-(1-&gt;4)-[alpha-L-Fuc-(1-&gt;3)]-beta-D-GlcNAc-(1-&gt;3)-beta-D-Gal-(1-&gt;4)-beta-D-GlcNAc-(1-&gt;3)-beta-D-Gal-(1-&gt;4)-beta-D-GlcNAc + GDP + H(+). It participates in protein modification; protein glycosylation. Its activity is regulated as follows. Inhibited by NaCl. Inhibited by GDP in a concentration dependent manner, with an IC(50) value of 93 uM. Also inhibited by GMP and GTP. Inhibited by N-ethylmaleimide. Activated by poly(ethylene glycol) by enhancing the thermal stability of FUT7. Activated by Mn2+, Ca2+, and Mg2+. Both panosialin A and B inhibit activity with IC(50) values of 4.8 and 5.3 ug/ml, respectively. Inhibited by gallic acid (GA) and (-)-epigallocatechin gallate (EGCG) in a time-dependent and irreversible manner with IC(50) values of 60 and 700 nM, respectively. In terms of biological role, catalyzes the transfer of L-fucose, from a guanosine diphosphate-beta-L-fucose, to the N-acetyl glucosamine (GlcNAc) of a distal alpha2,3 sialylated lactosamine unit of a glycoprotein or a glycolipid-linked sialopolylactosamines chain through an alpha-1,3 glycosidic linkage and participates in the final fucosylation step in the biosynthesis of the sialyl Lewis X (sLe(x)), a carbohydrate involved in cell and matrix adhesion during leukocyte trafficking and fertilization. In vitro, also synthesizes sialyl-dimeric-Lex structures, from VIM-2 structures and both di-fucosylated and trifucosylated structures from mono-fucosylated precursors. However does not catalyze alpha 1-3 fucosylation when an internal alpha 1-3 fucosylation is present in polylactosamine chain and the fucosylation rate of the internal GlcNAc residues is reduced once fucose has been added to the distal GlcNAc. Also catalyzes the transfer of a fucose from GDP-beta-fucose to the 6-sulfated a(2,3)sialylated substrate to produce 6-sulfo sLex mediating significant L-selectin-dependent cell adhesion. Through sialyl-Lewis(x) biosynthesis, can control SELE- and SELP-mediated cell adhesion with leukocytes and allows leukocytes tethering and rolling along the endothelial tissue thereby enabling the leukocytes to accumulate at a site of inflammation. May enhance embryo implantation through sialyl Lewis X (sLeX)-mediated adhesion of embryo cells to endometrium. May affect insulin signaling by up-regulating the phosphorylation and expression of some signaling molecules involved in the insulin-signaling pathway through SLe(x) which is present on the glycans of the INSRR alpha subunit. The polypeptide is Alpha-(1,3)-fucosyltransferase 7 (Rattus norvegicus (Rat)).